Consider the following 190-residue polypeptide: Endoribonuclease YbeY (190 aa).

Residues Met1–Thr25 are disordered. 3 residues coordinate Zn(2+): His147, His151, and His157.

The protein belongs to the endoribonuclease YbeY family. The cofactor is Zn(2+).

It localises to the cytoplasm. Functionally, single strand-specific metallo-endoribonuclease involved in late-stage 70S ribosome quality control and in maturation of the 3' terminus of the 16S rRNA. The chain is Endoribonuclease YbeY from Rhodopseudomonas palustris (strain ATCC BAA-98 / CGA009).